We begin with the raw amino-acid sequence, 70 residues long: DNA-directed RNA polymerase subunit omega (70 aa).

The protein belongs to the RNA polymerase subunit omega family. As to quaternary structure, the RNAP catalytic core consists of 2 alpha, 1 beta, 1 beta' and 1 omega subunit. When a sigma factor is associated with the core the holoenzyme is formed, which can initiate transcription.

The catalysed reaction is RNA(n) + a ribonucleoside 5'-triphosphate = RNA(n+1) + diphosphate. Functionally, promotes RNA polymerase assembly. Latches the N- and C-terminal regions of the beta' subunit thereby facilitating its interaction with the beta and alpha subunits. This chain is DNA-directed RNA polymerase subunit omega, found in Bacillus mycoides (strain KBAB4) (Bacillus weihenstephanensis).